Reading from the N-terminus, the 670-residue chain is Proline-rich receptor-like protein kinase PERK5 (670 aa).

Residues 1–181 (MADSPVDSSP…SGDSDSSSGN (181 aa)) are disordered. The Extracellular portion of the chain corresponds to 1 to 186 (MADSPVDSSP…SSSGNHPQAN (186 aa)). Over residues 14-31 (TSNGTPPSNGTSPSNESS) the composition is skewed to low complexity. Residues N22 and N28 are each glycosylated (N-linked (GlcNAc...) asparagine). Pro residues-rich tracts occupy residues 32–62 (PPTPPSSPPPSSISAPPPDISASFSPPPAPP) and 84–109 (PQTPENPSPPAPEGSTPVTPPAPPQT). N-linked (GlcNAc...) asparagine glycosylation occurs at N130. Residues 132-141 (TNGGNNNRDG) are compositionally biased toward low complexity. Residue N151 is glycosylated (N-linked (GlcNAc...) asparagine). Over residues 167 to 181 (SPPQNSGDSDSSSGN) the composition is skewed to low complexity. The chain crosses the membrane as a helical span at residues 187 to 207 (IGLIIGVLVGAGLLLLLAVCI). Topologically, residues 208-670 (CICCNRKKKK…RGSMKRNPQL (463 aa)) are cytoplasmic. T301 carries the post-translational modification Phosphothreonine. Positions 312–590 (FAQSNLLGQG…VRALEGDMSM (279 aa)) constitute a Protein kinase domain. Residues 318–326 (LGQGGFGYV) and K340 each bind ATP. A Phosphotyrosine modification is found at Y385. Residue D436 is the Proton acceptor of the active site. The residue at position 469 (S469) is a Phosphoserine. Phosphothreonine occurs at positions 470 and 475. The residue at position 483 (Y483) is a Phosphotyrosine. Disordered stretches follow at residues 589-613 (SMDDLSEGTRPGQSTYLSPGSVSSE) and 635-670 (EYQSSEYGGTSEYGLNPSASSSEEMNRGSMKRNPQL). Over residues 599–613 (PGQSTYLSPGSVSSE) the composition is skewed to polar residues.

This sequence belongs to the protein kinase superfamily. Ser/Thr protein kinase family. As to expression, mostly expressed in flower buds.

Its subcellular location is the cell membrane. It catalyses the reaction L-seryl-[protein] + ATP = O-phospho-L-seryl-[protein] + ADP + H(+). The catalysed reaction is L-threonyl-[protein] + ATP = O-phospho-L-threonyl-[protein] + ADP + H(+). This Arabidopsis thaliana (Mouse-ear cress) protein is Proline-rich receptor-like protein kinase PERK5 (PERK5).